A 185-amino-acid polypeptide reads, in one-letter code: Elongation factor P (185 aa).

It belongs to the elongation factor P family.

The protein localises to the cytoplasm. It functions in the pathway protein biosynthesis; polypeptide chain elongation. Its function is as follows. Involved in peptide bond synthesis. Stimulates efficient translation and peptide-bond synthesis on native or reconstituted 70S ribosomes in vitro. Probably functions indirectly by altering the affinity of the ribosome for aminoacyl-tRNA, thus increasing their reactivity as acceptors for peptidyl transferase. This is Elongation factor P from Pseudothermotoga lettingae (strain ATCC BAA-301 / DSM 14385 / NBRC 107922 / TMO) (Thermotoga lettingae).